The sequence spans 186 residues: UPF0301 protein Swit_2673 (186 aa).

Belongs to the UPF0301 (AlgH) family.

The protein is UPF0301 protein Swit_2673 of Rhizorhabdus wittichii (strain DSM 6014 / CCUG 31198 / JCM 15750 / NBRC 105917 / EY 4224 / RW1) (Sphingomonas wittichii).